The chain runs to 353 residues: Protein pelota homolog (353 aa).

It belongs to the eukaryotic release factor 1 family. Pelota subfamily. In terms of assembly, monomer. A divalent metal cation is required as a cofactor.

It is found in the cytoplasm. In terms of biological role, may function in recognizing stalled ribosomes, interact with stem-loop structures in stalled mRNA molecules, and effect endonucleolytic cleavage of the mRNA. May play a role in the release non-functional ribosomes and degradation of damaged mRNAs. Has endoribonuclease activity. This chain is Protein pelota homolog, found in Methanobrevibacter smithii (strain ATCC 35061 / DSM 861 / OCM 144 / PS).